Consider the following 503-residue polypeptide: Aspartyl/glutamyl-tRNA(Asn/Gln) amidotransferase subunit B (503 aa).

This sequence belongs to the GatB/GatE family. GatB subfamily. In terms of assembly, heterotrimer of A, B and C subunits.

The enzyme catalyses L-glutamyl-tRNA(Gln) + L-glutamine + ATP + H2O = L-glutaminyl-tRNA(Gln) + L-glutamate + ADP + phosphate + H(+). It carries out the reaction L-aspartyl-tRNA(Asn) + L-glutamine + ATP + H2O = L-asparaginyl-tRNA(Asn) + L-glutamate + ADP + phosphate + 2 H(+). Its function is as follows. Allows the formation of correctly charged Asn-tRNA(Asn) or Gln-tRNA(Gln) through the transamidation of misacylated Asp-tRNA(Asn) or Glu-tRNA(Gln) in organisms which lack either or both of asparaginyl-tRNA or glutaminyl-tRNA synthetases. The reaction takes place in the presence of glutamine and ATP through an activated phospho-Asp-tRNA(Asn) or phospho-Glu-tRNA(Gln). The chain is Aspartyl/glutamyl-tRNA(Asn/Gln) amidotransferase subunit B from Cereibacter sphaeroides (strain KD131 / KCTC 12085) (Rhodobacter sphaeroides).